Reading from the N-terminus, the 828-residue chain is Periplasmic nitrate reductase (828 aa).

A signal peptide (tat-type signal) is located at residues 1–31; it reads MKLSRRSFMKANAVAAAAAAAGLSVPGVARA. Residues 39-95 enclose the 4Fe-4S Mo/W bis-MGD-type domain; the sequence is IKWDKAPCRFCGTGCGVLVGTQQGRVVACQGDPDAPVNRGLNCIKGYFLPKIMYGKD. Residues Cys-46, Cys-49, Cys-53, and Cys-81 each contribute to the [4Fe-4S] cluster site. Residues Lys-83, Gln-150, Asn-175, Cys-179, 212–219, 243–247, 262–264, Met-372, Gln-376, Asn-482, 508–509, Lys-531, Asp-558, and 718–727 contribute to the Mo-bis(molybdopterin guanine dinucleotide) site; these read WGSNMAEM, STYQH, QSD, SD, and TGRVLEHWHT. Position 794 (Phe-794) interacts with substrate. Mo-bis(molybdopterin guanine dinucleotide) contacts are provided by Asn-802 and Lys-819.

The protein belongs to the prokaryotic molybdopterin-containing oxidoreductase family. NasA/NapA/NarB subfamily. In terms of assembly, component of the periplasmic nitrate reductase NapAB complex composed of NapA and NapB. Requires [4Fe-4S] cluster as cofactor. It depends on Mo-bis(molybdopterin guanine dinucleotide) as a cofactor. Predicted to be exported by the Tat system. The position of the signal peptide cleavage has not been experimentally proven.

Its subcellular location is the periplasm. It carries out the reaction 2 Fe(II)-[cytochrome] + nitrate + 2 H(+) = 2 Fe(III)-[cytochrome] + nitrite + H2O. Functionally, catalytic subunit of the periplasmic nitrate reductase complex NapAB. Receives electrons from NapB and catalyzes the reduction of nitrate to nitrite. The polypeptide is Periplasmic nitrate reductase (Escherichia coli O127:H6 (strain E2348/69 / EPEC)).